Reading from the N-terminus, the 356-residue chain is Histidinol-phosphate aminotransferase (356 aa).

Lys211 is modified (N6-(pyridoxal phosphate)lysine).

This sequence belongs to the class-II pyridoxal-phosphate-dependent aminotransferase family. Histidinol-phosphate aminotransferase subfamily. In terms of assembly, homodimer. Pyridoxal 5'-phosphate is required as a cofactor.

It catalyses the reaction L-histidinol phosphate + 2-oxoglutarate = 3-(imidazol-4-yl)-2-oxopropyl phosphate + L-glutamate. It participates in amino-acid biosynthesis; L-histidine biosynthesis; L-histidine from 5-phospho-alpha-D-ribose 1-diphosphate: step 7/9. This is Histidinol-phosphate aminotransferase from Blochmanniella floridana.